Consider the following 131-residue polypeptide: Arsenate reductase 1 (131 aa).

Catalysis depends on nucleophile residues Cys-10, Cys-82, and Cys-89. Cystine bridges form between Cys-10/Cys-82 and Cys-82/Cys-89.

Belongs to the low molecular weight phosphotyrosine protein phosphatase family. Thioredoxin-coupled ArsC subfamily.

Its subcellular location is the cytoplasm. It carries out the reaction arsenate + [thioredoxin]-dithiol + H(+) = arsenite + [thioredoxin]-disulfide + H2O. Functionally, catalyzes the reduction of arsenate [As(V)] to arsenite [As(III)]. This chain is Arsenate reductase 1, found in Staphylococcus saprophyticus subsp. saprophyticus (strain ATCC 15305 / DSM 20229 / NCIMB 8711 / NCTC 7292 / S-41).